Consider the following 184-residue polypeptide: Probable RNA 2'-phosphotransferase (184 aa).

The protein belongs to the KptA/TPT1 family.

Its function is as follows. Removes the 2'-phosphate from RNA via an intermediate in which the phosphate is ADP-ribosylated by NAD followed by a presumed transesterification to release the RNA and generate ADP-ribose 1''-2''-cyclic phosphate (APPR&gt;P). May function as an ADP-ribosylase. In Shigella boydii serotype 18 (strain CDC 3083-94 / BS512), this protein is Probable RNA 2'-phosphotransferase.